The primary structure comprises 449 residues: UDP-N-acetylmuramate--L-alanine ligase (449 aa).

121–127 (GAHGKSS) is an ATP binding site.

It belongs to the MurCDEF family.

It is found in the cytoplasm. The catalysed reaction is UDP-N-acetyl-alpha-D-muramate + L-alanine + ATP = UDP-N-acetyl-alpha-D-muramoyl-L-alanine + ADP + phosphate + H(+). The protein operates within cell wall biogenesis; peptidoglycan biosynthesis. Its function is as follows. Cell wall formation. This chain is UDP-N-acetylmuramate--L-alanine ligase, found in Helicobacter pylori (strain HPAG1).